Consider the following 235-residue polypeptide: Proteasome subunit alpha (235 aa).

Belongs to the peptidase T1A family. The 20S proteasome core is composed of 14 alpha and 14 beta subunits that assemble into four stacked heptameric rings, resulting in a barrel-shaped structure. The two inner rings, each composed of seven catalytic beta subunits, are sandwiched by two outer rings, each composed of seven alpha subunits. The catalytic chamber with the active sites is on the inside of the barrel. Has a gated structure, the ends of the cylinder being occluded by the N-termini of the alpha-subunits. Is capped by the proteasome-associated ATPase, ARC.

The protein resides in the cytoplasm. It participates in protein degradation; proteasomal Pup-dependent pathway. The formation of the proteasomal ATPase ARC-20S proteasome complex, likely via the docking of the C-termini of ARC into the intersubunit pockets in the alpha-rings, may trigger opening of the gate for substrate entry. Interconversion between the open-gate and close-gate conformations leads to a dynamic regulation of the 20S proteasome proteolysis activity. Its function is as follows. Component of the proteasome core, a large protease complex with broad specificity involved in protein degradation. In Arthrobacter sp. (strain FB24), this protein is Proteasome subunit alpha.